Here is a 397-residue protein sequence, read N- to C-terminus: 1-deoxy-D-xylulose 5-phosphate reductoisomerase (397 aa).

7 residues coordinate NADPH: threonine 17, glycine 18, serine 19, isoleucine 20, alanine 45, asparagine 47, and asparagine 130. Lysine 131 contacts 1-deoxy-D-xylulose 5-phosphate. Glutamate 132 provides a ligand contact to NADPH. Aspartate 156 is a Mn(2+) binding site. 4 residues coordinate 1-deoxy-D-xylulose 5-phosphate: serine 157, glutamate 158, serine 182, and histidine 205. Position 158 (glutamate 158) interacts with Mn(2+). Glycine 211 contributes to the NADPH binding site. Serine 218, asparagine 223, lysine 224, and glutamate 227 together coordinate 1-deoxy-D-xylulose 5-phosphate. Glutamate 227 is a Mn(2+) binding site.

This sequence belongs to the DXR family. The cofactor is Mg(2+). Mn(2+) serves as cofactor.

The catalysed reaction is 2-C-methyl-D-erythritol 4-phosphate + NADP(+) = 1-deoxy-D-xylulose 5-phosphate + NADPH + H(+). It functions in the pathway isoprenoid biosynthesis; isopentenyl diphosphate biosynthesis via DXP pathway; isopentenyl diphosphate from 1-deoxy-D-xylulose 5-phosphate: step 1/6. Functionally, catalyzes the NADPH-dependent rearrangement and reduction of 1-deoxy-D-xylulose-5-phosphate (DXP) to 2-C-methyl-D-erythritol 4-phosphate (MEP). The sequence is that of 1-deoxy-D-xylulose 5-phosphate reductoisomerase from Agrobacterium fabrum (strain C58 / ATCC 33970) (Agrobacterium tumefaciens (strain C58)).